A 278-amino-acid chain; its full sequence is Tryptophan synthase alpha chain (278 aa).

Catalysis depends on proton acceptor residues E50 and D61.

It belongs to the TrpA family. Tetramer of two alpha and two beta chains.

It catalyses the reaction (1S,2R)-1-C-(indol-3-yl)glycerol 3-phosphate + L-serine = D-glyceraldehyde 3-phosphate + L-tryptophan + H2O. The protein operates within amino-acid biosynthesis; L-tryptophan biosynthesis; L-tryptophan from chorismate: step 5/5. The alpha subunit is responsible for the aldol cleavage of indoleglycerol phosphate to indole and glyceraldehyde 3-phosphate. In Rhodopseudomonas palustris (strain TIE-1), this protein is Tryptophan synthase alpha chain.